The primary structure comprises 307 residues: Elongation factor Ts (307 aa).

The tract at residues 80–83 (TDFV) is involved in Mg(2+) ion dislocation from EF-Tu.

It belongs to the EF-Ts family.

The protein resides in the cytoplasm. Associates with the EF-Tu.GDP complex and induces the exchange of GDP to GTP. It remains bound to the aminoacyl-tRNA.EF-Tu.GTP complex up to the GTP hydrolysis stage on the ribosome. This Clostridium botulinum (strain 657 / Type Ba4) protein is Elongation factor Ts.